A 931-amino-acid chain; its full sequence is Myocardin-related transcription factor A (931 aa).

Residues Met-1–Asp-256 are mediates interaction with SCAI and ACTB. The residue at position 6 (Ser-6) is a Phosphoserine. The segment at Ser-6–Glu-23 is intervening spacer sequence 1. An RPEL 1 repeat occupies Asp-24–Ser-49. Residues Lys-27 to Arg-65 carry the Bipartite Nuclear localization signal motif. The intervening spacer sequence 2 stretch occupies residues Ala-50–Ala-67. The stretch at Asp-68–Ser-93 is one RPEL 2 repeat. Disordered stretches follow at residues Ala-110–Asp-256 and Pro-290–Pro-344. Ser-124, Ser-139, and Ser-156 each carry phosphoserine. Positions Ser-151–Ser-162 are enriched in polar residues. A compositionally biased stretch (pro residues) spans Pro-180–Pro-189. The segment covering Ser-191–Ser-215 has biased composition (polar residues). Basic and acidic residues predominate over residues Ala-216–Pro-231. The residue at position 305 (Thr-305) is a Phosphothreonine. Phosphoserine is present on residues Ser-310 and Ser-312. A compositionally biased stretch (low complexity) spans Ser-310–Ser-320. At Thr-313 the chain carries Phosphothreonine. Phosphoserine occurs at positions 317, 320, and 333. Residues Leu-347–Gln-381 enclose the SAP domain. 2 positions are modified to phosphoserine: Ser-385 and Ser-446. The interval Phe-444–Phe-476 is disordered. Thr-447 is modified (phosphothreonine). Ser-449 is subject to Phosphoserine. Thr-450 bears the Phosphothreonine mark. The residue at position 454 (Ser-454) is a Phosphoserine. Thr-456 carries the phosphothreonine modification. Ser-458 bears the Phosphoserine mark. Positions Glu-459–Gly-473 are enriched in polar residues. 4 positions are modified to phosphoserine: Ser-482, Ser-492, Ser-507, and Ser-511. The stretch at Arg-515–Gln-563 forms a coiled coil. 3 disordered regions span residues Glu-558–Gln-577, Lys-674–Gln-746, and Ala-763–Asp-816. Residues Ser-678 to Gly-694 are compositionally biased toward low complexity. A phosphoserine mark is found at Ser-685, Ser-691, and Ser-695. The segment covering Met-732–Gln-746 has biased composition (polar residues). Positions Ala-763–Ser-778 are enriched in basic and acidic residues. Residues Gly-784–Gln-799 are compositionally biased toward low complexity. 3 positions are modified to phosphoserine: Ser-792, Ser-807, and Ser-859.

As to quaternary structure, interacts with SRF, forming the SRF-MRTFA nuclear complex which binds the 5'-CArG-3' consensus motif (CArG box) on DNA via SRF. Interacts (via RPEL repeats) with globular actin (G-actin), thereby regulating its subcellular location and activity of the complex formed with SRF. Either forms a trivalent (by binding three G-actin monomers) or pentavalent (by binding five G-actin monomers) complex with G-actin. Forms a nuclear ternary complex with SCAI and SRF, leading to suppress MRTFA-induced SRF transcriptional activity. Interacts with beta-actin (ACTB); interaction with ACTB prevents interaction with SCAI. Interacts with MRTFB. Phosphorylation at Ser-6 by Erk inhibits binding of globular actin (G-actin), unmasking the nuclear localization signal (NLS) and promoting nuclear import. As to expression, ubiquitously expressed, has been detected in lung, placenta, small intestine, liver, kidney, spleen, thymus, colon, muscle, heart and brain. Expressed in peripheral blood mononuclear cells (at protein level).

The protein resides in the cytoplasm. The protein localises to the nucleus. Its function is as follows. Transcription coactivator that associates with the serum response factor (SRF) transcription factor to control expression of genes regulating the cytoskeleton during development, morphogenesis and cell migration. The SRF-MRTFA complex activity responds to Rho GTPase-induced changes in cellular globular actin (G-actin) concentration, thereby coupling cytoskeletal gene expression to cytoskeletal dynamics. MRTFA binds G-actin via its RPEL repeats, regulating activity of the MRTFA-SRF complex. Activity is also regulated by filamentous actin (F-actin) in the nucleus. In Homo sapiens (Human), this protein is Myocardin-related transcription factor A.